The following is a 378-amino-acid chain: Lipoyl synthase, mitochondrial (378 aa).

Residues cysteine 97, cysteine 102, cysteine 108, cysteine 128, cysteine 132, cysteine 135, and serine 343 each contribute to the [4Fe-4S] cluster site. One can recognise a Radical SAM core domain in the interval 111 to 332 (GSDKSAATAT…RQRALDMGFL (222 aa)).

The protein belongs to the radical SAM superfamily. Lipoyl synthase family. [4Fe-4S] cluster serves as cofactor.

The protein resides in the mitochondrion. It catalyses the reaction [[Fe-S] cluster scaffold protein carrying a second [4Fe-4S](2+) cluster] + N(6)-octanoyl-L-lysyl-[protein] + 2 oxidized [2Fe-2S]-[ferredoxin] + 2 S-adenosyl-L-methionine + 4 H(+) = [[Fe-S] cluster scaffold protein] + N(6)-[(R)-dihydrolipoyl]-L-lysyl-[protein] + 4 Fe(3+) + 2 hydrogen sulfide + 2 5'-deoxyadenosine + 2 L-methionine + 2 reduced [2Fe-2S]-[ferredoxin]. The protein operates within protein modification; protein lipoylation via endogenous pathway; protein N(6)-(lipoyl)lysine from octanoyl-[acyl-carrier-protein]: step 2/2. Its function is as follows. Catalyzes the radical-mediated insertion of two sulfur atoms into the C-6 and C-8 positions of the octanoyl moiety bound to the lipoyl domains of lipoate-dependent enzymes, thereby converting the octanoylated domains into lipoylated derivatives. The sequence is that of Lipoyl synthase, mitochondrial from Phaeosphaeria nodorum (strain SN15 / ATCC MYA-4574 / FGSC 10173) (Glume blotch fungus).